Here is a 977-residue protein sequence, read N- to C-terminus: GAS2-like protein pickled eggs (977 aa).

The region spanning 20–159 (EAMREDLAEW…CLLEVARRGA (140 aa)) is the Calponin-homology (CH) domain. The disordered stretch occupies residues 218-245 (VETDLYDDSDDSETEDDGDQNPVLMYGP). Over residues 221–236 (DLYDDSDDSETEDDGD) the composition is skewed to acidic residues. Positions 252–324 (NDLKSLDEMV…HYLDKHDPCR (73 aa)) constitute a GAR domain. 5 disordered regions span residues 397–543 (PTLQ…SEIS), 557–624 (AQKR…VCDG), 666–685 (VANTMGNPTPNLSKIPRSPL), 693–803 (IDNS…KGRS), and 910–977 (NLER…TELY). 2 stretches are compositionally biased toward polar residues: residues 399–428 (LQNGHSLSPNSGKYRSRSPTPQRKFLNQQA) and 436–454 (ATGSSQTVTTDTSSGQLLG). Residues 502-527 (GGSGVGSAAGGVSSGSAGSGVAGEQG) are compositionally biased toward gly residues. Positions 577–589 (RLDQTSSDSQISP) are enriched in polar residues. Positions 601–620 (ILEEEDLNGQDREEDQEDYS) are enriched in acidic residues. Composition is skewed to polar residues over residues 666–677 (VANTMGNPTPNL) and 731–741 (TRNSTGATTTP). Residues 928 to 953 (SSAASSCESNNSNAGAGSGAAAGSAS) show a composition bias toward low complexity.

Belongs to the GAS2 family. As to expression, expressed in the ovary and the ring canals of the germline cells. In larvae, expressed in the notal region of the wing disk.

Its subcellular location is the cytoplasm. The protein resides in the cytoskeleton. It is found in the cell cortex. In terms of biological role, essential for development and viability. Required for ovary development and oogenesis, and is essential for the development of the indirect flight muscles. May act as a negative regulator of the Notch signaling pathway in certain tissues, such as the muscle precursors and ovaries. May function as a linker protein between the actin and microtubule cytoskeletons. This is GAS2-like protein pickled eggs from Drosophila melanogaster (Fruit fly).